A 64-amino-acid polypeptide reads, in one-letter code: Large ribosomal subunit protein bL33 (64 aa).

It belongs to the bacterial ribosomal protein bL33 family.

In Gloeothece citriformis (strain PCC 7424) (Cyanothece sp. (strain PCC 7424)), this protein is Large ribosomal subunit protein bL33.